Here is a 30-residue protein sequence, read N- to C-terminus: Alpha-conotoxin EIVA (30 aa).

3 disulfide bridges follow: cysteine 2-cysteine 16, cysteine 3-cysteine 11, and cysteine 14-cysteine 24. 4-hydroxyproline occurs at positions 7, 13, 21, 22, and 27. Glycine 30 bears the Glycine amide mark.

Expressed by the venom duct.

It localises to the secreted. Functionally, alpha-conotoxins act on postsynaptic membranes, they bind to the nicotinic acetylcholine receptors (nAChR) and thus inhibit them. This toxin binds with high affinity to both fetal (alpha-1-beta-1-epsilon-delta (CHRNA1-CHRNB1-CHRND-CHRNE) subunits) and adult (alpha-1/beta-1/gamma/delta subunits) mammalian muscle nicotinic acetylcholine receptors (nAChR). The chain is Alpha-conotoxin EIVA from Conus ermineus (Agate cone).